The sequence spans 372 residues: Delta-type opioid receptor (372 aa).

The Extracellular portion of the chain corresponds to 1–47 (MELVPSARAELQSSPLVNLSDAFPSAFPSAGANASGSPGARSASSLA). 2 N-linked (GlcNAc...) asparagine glycosylation sites follow: Asn-18 and Asn-33. A helical transmembrane segment spans residues 48-75 (LAIAITALYSAVCAVGLLGNVLVMFGIV). At 76–85 (RYTKLKTATN) the chain is on the cytoplasmic side. The helical transmembrane segment at 86-110 (IYIFNLALADALATSTLPFQSAKYL) threads the bilayer. At 111–122 (METWPFGELLCK) the chain is on the extracellular side. Cys-121 and Cys-198 are joined by a disulfide. Residues 123 to 144 (AVLSIDYYNMFTSIFTLTMMSV) form a helical membrane-spanning segment. At 145-163 (DRYIAVCHPVKALDFRTPA) the chain is on the cytoplasmic side. The helical transmembrane segment at 164–186 (KAKLINICIWVLASGVGVPIMVM) threads the bilayer. At 187-206 (AVTQPRDGAVVCMLQFPSPS) the chain is on the extracellular side. The chain crosses the membrane as a helical span at residues 207–238 (WYWDTVTKICVFLFAFVVPILIITVCYGLMLL). The Cytoplasmic portion of the chain corresponds to 239 to 261 (RLRSVRLLSGSKEKDRSLRRITR). Residues 262–284 (MVLVVVGAFVVCWAPIHIFVIVW) traverse the membrane as a helical segment. The Extracellular segment spans residues 285-299 (TLVDINRRDPLVVAA). A helical membrane pass occupies residues 300-321 (LHLCIALGYANSSLNPVLYAFL). Residues 322–372 (DENFKRCFRQLCRTPCGRQEPGSLRRPRQATTRERVTACTPSDGPGGGAAA) are Cytoplasmic-facing. A lipid anchor (S-palmitoyl cysteine) is attached at Cys-333. The interval 340–372 (QEPGSLRRPRQATTRERVTACTPSDGPGGGAAA) is disordered.

The protein belongs to the G-protein coupled receptor 1 family. In terms of assembly, may form homooligomers. Forms a heterodimer with OPRM1. Interacts with GPRASP1. Interacts with RTP4; the interaction promotes cell surface localization of the OPRD1-OPRM1 heterodimer. Post-translationally, ubiquitinated. A basal ubiquitination seems not to be related to degradation. Ubiquitination is increased upon formation of OPRM1:OPRD1 oligomers leading to proteasomal degradation; the ubiquitination is diminished by RTP4. Brain, with high concentrations in the basal ganglia and limbic regions.

The protein localises to the cell membrane. Functionally, G-protein coupled receptor that functions as a receptor for endogenous enkephalins and for a subset of other opioids. Ligand binding causes a conformation change that triggers signaling via guanine nucleotide-binding proteins (G proteins) and modulates the activity of down-stream effectors, such as adenylate cyclase. Signaling leads to the inhibition of adenylate cyclase activity. Inhibits neurotransmitter release by reducing calcium ion currents and increasing potassium ion conductance. Plays a role in the perception of pain and in opiate-mediated analgesia. Plays a role in developing analgesic tolerance to morphine. The chain is Delta-type opioid receptor (Oprd1) from Mus musculus (Mouse).